Reading from the N-terminus, the 241-residue chain is RxLR effector protein SFI5 (241 aa).

Residues 1–20 form the signal peptide; sequence MLRQARPLVVLIAVTFLVAS. The RxLR-dEER motif lies at 44 to 62; that stretch reads RLLRTHHATIKVNADSEER.

Belongs to the RxLR effector family.

The protein resides in the secreted. It is found in the host cell membrane. Effector that suppresses flg22-induced post-translational MAP kinase activation in tomato but not in Arabidopsis. The perception of highly conserved pathogen- or microbe-associated molecular patterns (PAMPs/MAMPs), such as flg22, triggers converging signaling pathways recruiting MAP kinase cascades and inducing transcriptional re-programming, yielding a generic antimicrobial response. The chain is RxLR effector protein SFI5 from Phytophthora infestans (strain T30-4) (Potato late blight agent).